Consider the following 160-residue polypeptide: Triabin (160 aa).

Residues 1-18 (MKTIIAVTIFGILTCAYA) form the signal peptide. 3 disulfides stabilise this stretch: Cys24-Cys128, Cys57-Cys160, and Cys87-Cys102.

It belongs to the calycin superfamily. Triabin family. In terms of tissue distribution, expressed in salivary glands.

Its subcellular location is the secreted. Its function is as follows. Thrombin inhibitor. Forms a non-covalent complex with thrombin at a molar ratio of 1:1. Inhibits thrombin-induced platelet aggregation. Prolongs thrombin clotting time and activated partial thromboplastin time. It only minimally suppresses the amidolytic activity of thrombin. Inhibits thrombin-mediated fibrin formation in the host. Inhibits thrombin-induced endothelium-dependent relaxant and contractile responses in host blood vessels. Inhibits thrombin-induced mitogenesis in host vascular smooth muscle cells. This Meccus pallidipennis (Triatomine bug) protein is Triabin.